Here is a 120-residue protein sequence, read N- to C-terminus: Cu-Zn superoxide dismutase-like protein OPG175 (120 aa).

The cysteines at positions 52 and 102 are disulfide-linked.

Belongs to the Cu-Zn superoxide dismutase family.

The protein resides in the virion. It is found in the host cytoplasm. Functionally, superoxide dismutase-like protein with no enzymatic activity. This chain is Cu-Zn superoxide dismutase-like protein OPG175 (OPG175), found in Vaccinia virus (strain Tashkent) (VACV).